Consider the following 104-residue polypeptide: Large ribosomal subunit protein uL24 (104 aa).

Belongs to the universal ribosomal protein uL24 family. In terms of assembly, part of the 50S ribosomal subunit.

One of two assembly initiator proteins, it binds directly to the 5'-end of the 23S rRNA, where it nucleates assembly of the 50S subunit. Its function is as follows. One of the proteins that surrounds the polypeptide exit tunnel on the outside of the subunit. The chain is Large ribosomal subunit protein uL24 from Yersinia enterocolitica serotype O:8 / biotype 1B (strain NCTC 13174 / 8081).